A 131-amino-acid polypeptide reads, in one-letter code: uncharacterized protein (131 aa).

Residues 17-39 (VILLILILLPVVFLHIMLATWGL) traverse the membrane as a helical segment.

The protein resides in the membrane. This is an uncharacterized protein from Archaeoglobus fulgidus (strain ATCC 49558 / DSM 4304 / JCM 9628 / NBRC 100126 / VC-16).